Reading from the N-terminus, the 399-residue chain is Transmembrane protein 237 homolog (399 aa).

Residues 1 to 11 (MPPTSRPVPPP) are compositionally biased toward pro residues. The disordered stretch occupies residues 1 to 158 (MPPTSRPVPP…PHDKRNMPAK (158 aa)). Basic and acidic residues-rich tracts occupy residues 36 to 45 (NQQRRFRENN), 111 to 135 (EAAK…DPRR), and 144 to 158 (KSFR…MPAK). 4 consecutive transmembrane segments (helical) span residues 222–242 (IANI…IFSF), 256–276 (MSLP…VSAI), 301–321 (GLIT…CIQL), and 343–363 (VFNV…AFKP).

The protein belongs to the TMEM237 family.

The protein localises to the membrane. The protein resides in the cell projection. It is found in the cilium. In terms of biological role, component of the transition zone in primary cilia. Required for ciliogenesis. This chain is Transmembrane protein 237 homolog, found in Caenorhabditis elegans.